The following is a 261-amino-acid chain: Carnitinyl-CoA dehydratase (261 aa).

The active-site Nucleophile is the glutamate 111. Glutamate 131 serves as the catalytic Proton acceptor.

The protein belongs to the enoyl-CoA hydratase/isomerase family.

The enzyme catalyses (R)-carnitinyl-CoA = crotonobetainyl-CoA + H2O. The protein operates within amine and polyamine metabolism; carnitine metabolism. In terms of biological role, catalyzes the reversible dehydration of L-carnitinyl-CoA to crotonobetainyl-CoA. This Salmonella dublin (strain CT_02021853) protein is Carnitinyl-CoA dehydratase.